Reading from the N-terminus, the 312-residue chain is Tetraacyldisaccharide 4'-kinase (312 aa).

60-67 (IAGGSGKT) provides a ligand contact to ATP.

It belongs to the LpxK family.

The enzyme catalyses a lipid A disaccharide + ATP = a lipid IVA + ADP + H(+). The protein operates within glycolipid biosynthesis; lipid IV(A) biosynthesis; lipid IV(A) from (3R)-3-hydroxytetradecanoyl-[acyl-carrier-protein] and UDP-N-acetyl-alpha-D-glucosamine: step 6/6. Its function is as follows. Transfers the gamma-phosphate of ATP to the 4'-position of a tetraacyldisaccharide 1-phosphate intermediate (termed DS-1-P) to form tetraacyldisaccharide 1,4'-bis-phosphate (lipid IVA). This chain is Tetraacyldisaccharide 4'-kinase, found in Helicobacter pylori (strain HPAG1).